A 1196-amino-acid chain; its full sequence is DNA excision repair protein ERCC-5 homolog (1196 aa).

Residues 1–78 are N-domain; it reads MGVQGLWKLL…RIRPIFVFDG (78 aa). Asp-30 is a binding site for Mg(2+). The tract at residues 31–67 is DNA-binding; may bind to the undamaged single-strand DNA of the DNA repair bubble; it reads ISIWLNQAVKGARDRQGNAIQNAHLLTLFHRLCKLLF. Mg(2+) is bound at residue Asp-77. The tract at residues 79-818 is spacer region; the sequence is EAPLLKRQTL…LQLFGIPYIV (740 aa). Disordered stretches follow at residues 152–176, 302–321, 629–661, and 722–758; these read PLED…MNQK, KQEE…NSSQ, QTTQ…SSAM, and AVEE…DDVS. The segment covering 154 to 168 has biased composition (acidic residues); it reads EDNENNSSEEEEERE. Residues 311 to 321 show a composition bias toward polar residues; the sequence is PPQSITFNSSQ. Residues 722–731 show a composition bias toward polar residues; the sequence is AVEEGNSGSQ. Residues 734–755 show a composition bias toward basic and acidic residues; it reads PLEHDSGEPHEQSNSEESKDLD. Residues 819-914 are I-domain; that stretch reads APMEAEAQCA…VSAMEILNEF (96 aa). Glu-822, Glu-824, Asp-843, and Asp-845 together coordinate Mg(2+). A DNA-binding; may bind to the undamaged single-strand DNA of the DNA repair bubble region spans residues 853-869; it reads HVYKNFFSQNKHVEYYQ. A DNA-binding; H2TH (helix-2turn-helix) motif which binds double-stranded DNA region spans residues 881-913; that stretch reads RSKLINLAYLLGSDYTEGIPTVGYVSAMEILNE. Residue Asp-894 coordinates Mg(2+). Positions 945 to 951 are DNA-binding; may bind double-stranded DNA; that stretch reads TKVKKKL. The tract at residues 1075–1196 is disordered; sequence CTNQRKGQKT…KTMKETVKRK (122 aa). The short motif at 1079 to 1095 is the Nuclear localization signal 1 element; it reads RKGQKTNTKSQGTKRRK. Residues 1119–1130 are compositionally biased toward low complexity; it reads SSKAYSSDGSSS. The span at 1142-1158 shows a compositional bias: polar residues; the sequence is KQSQSGIVGRQKASNKV. The Nuclear localization signal 2 motif lies at 1179-1196; sequence FQGKKTKSKTMKETVKRK.

It belongs to the XPG/RAD2 endonuclease family. XPG subfamily. In terms of assembly, monomer. Homodimer. The cofactor is Mg(2+).

It localises to the nucleus. It is found in the chromosome. Single-stranded structure-specific DNA endonuclease involved in DNA excision repair. Makes the 3'incision in DNA nucleotide excision repair (NER). Binds and bends DNA repair bubble substrate and breaks base stacking at the single-strand/double-strand DNA junction of the DNA bubble. Plays a role in base excision repair (BER) by promoting the binding of DNA glycosylase to its substrate and increasing DNA glycosylase catalytic activity that removes oxidized pyrimidines from DNA. Involved in transcription-coupled nucleotide excision repair (TCR) which allows RNA polymerase II-blocking lesions to be rapidly removed from the transcribed strand of active genes. Required for DNA replication fork maintenance and preservation of genomic stability. Involved in homologous recombination repair (HRR) induced by DNA replication stress. During HRR, binds to the replication fork with high specificity and stabilizes it. The sequence is that of DNA excision repair protein ERCC-5 homolog (ercc5) from Xenopus laevis (African clawed frog).